The primary structure comprises 47 residues: Lysis protein for colicin E9 (47 aa).

Residues 1 to 19 (MKKITGIILLLLAAIILAA) form the signal peptide. Residue Cys-20 is the site of N-palmitoyl cysteine attachment. The S-diacylglycerol cysteine moiety is linked to residue Cys-20.

It is found in the cell outer membrane. Its function is as follows. Lysis proteins are required for both colicin release and partial cell lysis. The chain is Lysis protein for colicin E9 (lys) from Escherichia coli.